A 248-amino-acid chain; its full sequence is MSTLFVSDVHLSEKNPKLTDLFFYFLKNKAILSRSLYILGDLFETWVGDDNITYISKELANITNYLADNGTSCYFIKGNRDFLIGKSYFKSSKITLLPYKKIININKQSIIILHGDTLCLNDKNYQKFKKLVNQDWLQKFFLKLPLCARIKISNLIINKRKKLNLKRMNYLTKINKEYIKKIMEQTNTNIMIHGHIHMPKVHVLPNRKYRIVLGMWNKSGSILEINKKLSLIKFSKLYCSYTSYPLKY.

5 residues coordinate Mn(2+): Asp-8, His-10, Asp-41, Asn-79, and His-114. 79–80 provides a ligand contact to substrate; sequence NR. Asp-122, Asn-164, Arg-167, and His-195 together coordinate substrate. The Mn(2+) site is built by His-195 and His-197.

It belongs to the LpxH family. Mn(2+) is required as a cofactor.

The protein resides in the cell inner membrane. The enzyme catalyses UDP-2-N,3-O-bis[(3R)-3-hydroxytetradecanoyl]-alpha-D-glucosamine + H2O = 2-N,3-O-bis[(3R)-3-hydroxytetradecanoyl]-alpha-D-glucosaminyl 1-phosphate + UMP + 2 H(+). It functions in the pathway glycolipid biosynthesis; lipid IV(A) biosynthesis; lipid IV(A) from (3R)-3-hydroxytetradecanoyl-[acyl-carrier-protein] and UDP-N-acetyl-alpha-D-glucosamine: step 4/6. Functionally, hydrolyzes the pyrophosphate bond of UDP-2,3-diacylglucosamine to yield 2,3-diacylglucosamine 1-phosphate (lipid X) and UMP by catalyzing the attack of water at the alpha-P atom. Involved in the biosynthesis of lipid A, a phosphorylated glycolipid that anchors the lipopolysaccharide to the outer membrane of the cell. The polypeptide is UDP-2,3-diacylglucosamine hydrolase (Wigglesworthia glossinidia brevipalpis).